Consider the following 298-residue polypeptide: Probable GTP 3',8-cyclase (298 aa).

Positions 4–227 (RYGREIRSFR…MQNRKKYVID (224 aa)) constitute a Radical SAM core domain. Position 13 (R13) interacts with GTP. 2 residues coordinate [4Fe-4S] cluster: C20 and C24. S-adenosyl-L-methionine is bound at residue Y26. C27 is a [4Fe-4S] cluster binding site. A GTP-binding site is contributed by K61. G65 serves as a coordination point for S-adenosyl-L-methionine. T91 is a binding site for GTP. S115 is an S-adenosyl-L-methionine binding site. GTP is bound at residue K152. [4Fe-4S] cluster is bound by residues C243 and C246. Residue 248–250 (RIR) coordinates GTP. Residue C260 participates in [4Fe-4S] cluster binding.

Belongs to the radical SAM superfamily. MoaA family. It depends on [4Fe-4S] cluster as a cofactor.

It catalyses the reaction GTP + AH2 + S-adenosyl-L-methionine = (8S)-3',8-cyclo-7,8-dihydroguanosine 5'-triphosphate + 5'-deoxyadenosine + L-methionine + A + H(+). It functions in the pathway cofactor biosynthesis; molybdopterin biosynthesis. Catalyzes the cyclization of GTP to (8S)-3',8-cyclo-7,8-dihydroguanosine 5'-triphosphate. This Methanococcus maripaludis (strain C6 / ATCC BAA-1332) protein is Probable GTP 3',8-cyclase.